The following is a 250-amino-acid chain: Beta-lactamase HcpA (250 aa).

The first 25 residues, 1-25, serve as a signal peptide directing secretion; sequence MLGSVKKTLFGVLCLGALCLRGLMA. 5 TPR repeats span residues 29-62, 67-98, 100-133, 134-169, and 170-202; these read AKELVSLGIESVKKQDFAQAKAHFEKACELKEGF, LGAFYEEGKGVGKDLKKAIQFYTKGCELNDGY, CRLLGNLYYNGQGVSKDAKKASQYYSKSCELNHA, EGCTVLGSLHHYGVGTPKDLRKALDLYEKACDLKDS, and PGCINAGYMYGVAKNFKEAIVRYSKACELKDGR. 6 cysteine pairs are disulfide-bonded: Cys-56–Cys-64, Cys-92–Cys-100, Cys-128–Cys-136, Cys-164–Cys-172, Cys-196–Cys-204, and Cys-232–Cys-240.

It belongs to the hcp beta-lactamase family.

It is found in the secreted. The enzyme catalyses a beta-lactam + H2O = a substituted beta-amino acid. Inhibited by cloxacillin and oxacillin but not by ACA derivatives or metal chelators. Slowly hydrolyzes 6-aminopenicillinic acid and 7-aminocephalosporanic acid (ACA) derivatives. May be involved in the synthesis of the cell wall peptidoglycan. The polypeptide is Beta-lactamase HcpA (hcpA) (Helicobacter pylori (strain J99 / ATCC 700824) (Campylobacter pylori J99)).